Reading from the N-terminus, the 279-residue chain is Putative F-box protein At1g50880 (279 aa).

One can recognise an F-box domain in the interval 19–69; it reads SSSMSSIPLDVTSKILAKLPAKSVLRARCVSKQWSSISTDPYFISNMFPKQ.

This Arabidopsis thaliana (Mouse-ear cress) protein is Putative F-box protein At1g50880.